Here is a 728-residue protein sequence, read N- to C-terminus: Catalase-peroxidase (728 aa).

Positions 97–225 form a cross-link, tryptophyl-tyrosyl-methioninium (Trp-Tyr) (with M-251); sequence WHSAGTYRIA…LAAVMMGLIY (129 aa). His98 (proton acceptor) is an active-site residue. The tryptophyl-tyrosyl-methioninium (Tyr-Met) (with W-97) cross-link spans 225–251; it reads YVNPEGVDGNPDPLRTAQDIRITFARM. Residue His266 participates in heme b binding.

The protein belongs to the peroxidase family. Peroxidase/catalase subfamily. In terms of assembly, homodimer or homotetramer. The cofactor is heme b. Post-translationally, formation of the three residue Trp-Tyr-Met cross-link is important for the catalase, but not the peroxidase activity of the enzyme.

The enzyme catalyses H2O2 + AH2 = A + 2 H2O. It catalyses the reaction 2 H2O2 = O2 + 2 H2O. Functionally, bifunctional enzyme with both catalase and broad-spectrum peroxidase activity. The polypeptide is Catalase-peroxidase (Shewanella putrefaciens (strain CN-32 / ATCC BAA-453)).